The following is a 290-amino-acid chain: Elongation factor Ts (290 aa).

An involved in Mg(2+) ion dislocation from EF-Tu region spans residues 81 to 84; that stretch reads TDFV.

It belongs to the EF-Ts family.

The protein localises to the cytoplasm. Associates with the EF-Tu.GDP complex and induces the exchange of GDP to GTP. It remains bound to the aminoacyl-tRNA.EF-Tu.GTP complex up to the GTP hydrolysis stage on the ribosome. This chain is Elongation factor Ts, found in Vesicomyosocius okutanii subsp. Calyptogena okutanii (strain HA).